The sequence spans 696 residues: Glutamate-rich protein 6B (696 aa).

Positions 1–10 (MSAENNQLSG) are enriched in polar residues. Positions 1–105 (MSAENNQLSG…EYLEKAGYLE (105 aa)) are disordered. Composition is skewed to acidic residues over residues 32-44 (EDTEVELDEESLQ) and 54-72 (ESLEDKEYLEEEEDLEEEE). Basic and acidic residues predominate over residues 73-91 (YLGKEEYLKEEEYLGKEEH).

Belongs to the ERICH6 family.

In Homo sapiens (Human), this protein is Glutamate-rich protein 6B (ERICH6B).